The chain runs to 418 residues: ML-236A carboxylate methylbutanoyltransferase mlcH (418 aa).

Arg-78 contributes to the monacolin J binding site. Ser-81 acts as the Acyl-ester intermediate in catalysis. Positions 178, 193, and 262 each coordinate monacolin J. Gly-370 provides a ligand contact to 2-methylbutanoate.

This sequence belongs to the class-A beta-lactamase family.

It catalyses the reaction ML-236A carboxylate + (S)-2-methylbutanoyl-[2-methylbutanoate polyketide synthase] = mevinic carboxylate + holo-[2-methylbutanoate polyketide synthase]. It participates in polyketide biosynthesis. Functionally, compactin diketide synthase; part of the gene cluster that mediates the biosynthesis of compactin, also known as mevastatin or ML-236B, and which acts as a potent competitive inhibitor of HMG-CoA reductase. Compactin biosynthesis is performed in two stages. The first stage is catalyzed by the nonaketide synthase mlcA, which belongs to type I polyketide synthases and catalyzes the iterative nine-step formation of the polyketide. This PKS stage is completed by the action of dehydrogenase mlcG, which catalyzes the NADPH-dependent reduction of the unsaturated tetra-, penta- and heptaketide intermediates that arise during the mlcA-mediated biosynthesis of the nonaketide chain and leads to dihydro-ML-236C carboxylate. Covalently bound dihydro-ML-236C carboxylate is released from mlcA by the mlcF esterase. Conversion of dihydro-ML-236C carboxylate into ML-236A carboxylate is subsequently performed with the participation of molecular oxygen and P450 monoogygenase mlcC. Finally, mlcH performs the conversion of ML-236A carboxylate to ML-236B/compactin carboxylate through the addition of the side-chain diketide moiety produced by the diketide synthase mlcB. The chain is ML-236A carboxylate methylbutanoyltransferase mlcH from Penicillium citrinum.